The primary structure comprises 285 residues: MATSKLKTQNVVVSLSLTLTLVLVLLTSKANSAETVSFSWNKFVPKQPNMILQGDAIVTSSGKLQLNKVDENGTPKPSSLGRALYSTPIHIWDKETGSVASFAASFNFTFYAPDTKRLADGLAFFLAPIDTKPQTHAGYLGLFNENESGDQVVAVEFDTFRNSWDPPNPHIGINVNSIRSIKTTSWDLANNKVAKVLITYDASTSLLVASLVYPSQRTSNILSDVVDLKTSLPEWVRIGFSAATGLDIPGESHDVLSWSFASNLPHASSNIDPLDLTSFVLHEAI.

An N-terminal signal peptide occupies residues 1 to 32; sequence MATSKLKTQNVVVSLSLTLTLVLVLLTSKANS. N107 is a glycosylation site (N-linked (GlcNAc...) asparagine).

Belongs to the leguminous lectin family. In terms of assembly, homotetramer.

Binds GalNAc and galactose. The sequence is that of Lectin (LE1) from Glycine max (Soybean).